The following is a 26-amino-acid chain: Morintide mO4 (26 aa).

Residues 1 to 26 (NRLCCSQYGFCGTTSEYCSRVSGCQS) form the Chitin-binding type-1 domain. A disulfide bridge links Cys4 with Cys18.

As to expression, seeds (at protein level).

Functionally, chitin-binding protein which functions in defense against chitin-containing fungal pathogens. The chain is Morintide mO4 from Moringa oleifera (Horseradish tree).